A 767-amino-acid polypeptide reads, in one-letter code: Receptor-type tyrosine-protein phosphatase-like ida-1 (767 aa).

An N-terminal signal peptide occupies residues 1-19 (MRFFHSIIVLLFSISTGSA). Residues 20–398 (FLLYGCNLSE…SLPVESSERD (379 aa)) lie on the Lumenal side of the membrane. Residues Asn-26 and Asn-146 are each glycosylated (N-linked (GlcNAc...) asparagine). The chain crosses the membrane as a helical span at residues 399-419 (WLLMPVLFVCAFTVTALGLVA). Residues 420-767 (AVQIARSRRH…NHLLKSIATK (348 aa)) lie on the Cytoplasmic side of the membrane. Residues 527–756 (SQNRTILPFD…KLVYGCVAQE (230 aa)) form the Tyrosine-protein phosphatase domain.

This sequence belongs to the protein-tyrosine phosphatase family. Receptor class 8 subfamily. Post-translationally, proteolytically cleaved probably at a dibasic consensus sequence by egl-3. As to expression, in hermaphrodites specifically expressed in neurons and in particular in the head nerve ring (ADE, ALA, ASI, ASK, AUA, ASG, AVH and AVJ neurons), in the ventral nerve cord, pre-anal ganglia (PVP neuron), in the tail (PHA, PHB and PHC neurons) and in vulval motor neurons VC and HSN and the vulval uv1 cells. In males, also expressed in neurons anterior to the nerve ring and male-specific neurons in the tail.

Its subcellular location is the cytoplasmic vesicle membrane. The protein localises to the perikaryon. It localises to the cell projection. The protein resides in the axon. It is found in the dendrite. In terms of biological role, regulates dense-core vesicle (DCV) trafficking and/or secretion. Probably by controlling DCV trafficking, plays a role in the AVG neuron-mediated formation of the right axon tract of the ventral nerve cord. Involved in locomotion by regulating acetylcholine release. Probably by controlling the secretion of FLP neuropeptides, regulates the turning step of male mating behavior. Plays a role in preventing dauer formation. This chain is Receptor-type tyrosine-protein phosphatase-like ida-1, found in Caenorhabditis elegans.